The primary structure comprises 247 residues: Ribosomal RNA small subunit methyltransferase G (247 aa).

Residues glycine 84, phenylalanine 89, 136-137 (AE), and arginine 155 contribute to the S-adenosyl-L-methionine site.

The protein belongs to the methyltransferase superfamily. RNA methyltransferase RsmG family.

It is found in the cytoplasm. Functionally, specifically methylates the N7 position of a guanine in 16S rRNA. The chain is Ribosomal RNA small subunit methyltransferase G from Prochlorococcus marinus (strain MIT 9313).